A 131-amino-acid polypeptide reads, in one-letter code: Small ribosomal subunit protein eS24 (131 aa).

An N-acetylmethionine modification is found at methionine 1. Position 9 is a phosphothreonine (threonine 9). A Glycyl lysine isopeptide (Lys-Gly) (interchain with G-Cter in SUMO2) cross-link involves residue lysine 37. Basic and acidic residues predominate over residues 90–100; sequence RLARHGLYEKK. Residues 90-131 are disordered; sequence RLARHGLYEKKKTSRKQRKERKNRMKKVRGTAKANVGAGKKK. Basic residues predominate over residues 101–119; that stretch reads KTSRKQRKERKNRMKKVRG.

This sequence belongs to the eukaryotic ribosomal protein eS24 family. In terms of assembly, component of the small ribosomal subunit. Part of the small subunit (SSU) processome, composed of more than 70 proteins and the RNA chaperone small nucleolar RNA (snoRNA) U3.

The protein resides in the cytoplasm. The protein localises to the nucleus. It localises to the nucleolus. Its function is as follows. Component of the small ribosomal subunit. The ribosome is a large ribonucleoprotein complex responsible for the synthesis of proteins in the cell. Required for processing of pre-rRNA and maturation of 40S ribosomal subunits. Part of the small subunit (SSU) processome, first precursor of the small eukaryotic ribosomal subunit. During the assembly of the SSU processome in the nucleolus, many ribosome biogenesis factors, an RNA chaperone and ribosomal proteins associate with the nascent pre-rRNA and work in concert to generate RNA folding, modifications, rearrangements and cleavage as well as targeted degradation of pre-ribosomal RNA by the RNA exosome. This chain is Small ribosomal subunit protein eS24 (RPS24), found in Pongo abelii (Sumatran orangutan).